We begin with the raw amino-acid sequence, 472 residues long: Adenosylhomocysteinase (472 aa).

Substrate contacts are provided by T64, D138, and E198. 199–201 (TTT) provides a ligand contact to NAD(+). Substrate contacts are provided by K228 and D232. Residues N233, 262–267 (GFGDVG), E285, N320, 341–343 (IGH), and N386 each bind NAD(+).

It belongs to the adenosylhomocysteinase family. It depends on NAD(+) as a cofactor.

The protein localises to the cytoplasm. It catalyses the reaction S-adenosyl-L-homocysteine + H2O = L-homocysteine + adenosine. The protein operates within amino-acid biosynthesis; L-homocysteine biosynthesis; L-homocysteine from S-adenosyl-L-homocysteine: step 1/1. Functionally, may play a key role in the regulation of the intracellular concentration of adenosylhomocysteine. This chain is Adenosylhomocysteinase, found in Prochlorococcus marinus subsp. pastoris (strain CCMP1986 / NIES-2087 / MED4).